A 915-amino-acid polypeptide reads, in one-letter code: Transferrin-binding protein A (915 aa).

The signal sequence occupies residues 1–24 (MQQQHLFRLNILCLSLMTALPAYA). Positions 38 to 45 (DTIQVKAK) match the TonB box motif. The 126-residue stretch at 51-176 (RDNEVTGLGK…LAGSVAFQTK (126 aa)) folds into the TBDR plug domain. The region spanning 187–915 (QWGIQSKTAY…NYTFSLEMKF (729 aa)) is the TBDR beta-barrel domain. Residues 526-540 (LKTPPQNNGKKTSPN) are compositionally biased toward polar residues. The disordered stretch occupies residues 526–545 (LKTPPQNNGKKTSPNGREKN). The TonB C-terminal box signature appears at 898–915 (NRYAAPGRNYTFSLEMKF).

This sequence belongs to the TonB-dependent receptor family. As to quaternary structure, binds both human apo- and holo-transferrin (TF), via the TF C-terminus. Forms a large complex with TF and TbpB.

Its subcellular location is the cell outer membrane. Functionally, neisseria acquires iron by extracting it from serum transferrin (TF) in its human host. Acts as a TF receptor and is required for TF utilization. Binds both apo- and holo-TF, via the TF C-terminus. This chain is Transferrin-binding protein A, found in Neisseria gonorrhoeae.